Reading from the N-terminus, the 118-residue chain is Large ribosomal subunit protein uL22 (118 aa).

It belongs to the universal ribosomal protein uL22 family. Part of the 50S ribosomal subunit.

This protein binds specifically to 23S rRNA; its binding is stimulated by other ribosomal proteins, e.g. L4, L17, and L20. It is important during the early stages of 50S assembly. It makes multiple contacts with different domains of the 23S rRNA in the assembled 50S subunit and ribosome. In terms of biological role, the globular domain of the protein is located near the polypeptide exit tunnel on the outside of the subunit, while an extended beta-hairpin is found that lines the wall of the exit tunnel in the center of the 70S ribosome. The protein is Large ribosomal subunit protein uL22 of Chlorobium limicola (strain DSM 245 / NBRC 103803 / 6330).